A 506-amino-acid chain; its full sequence is Deoxyribodipyrimidine photo-lyase (506 aa).

A compositionally biased stretch (pro residues) spans 1-21 (MPPTSVSPPRTAPGPANPSPA). Residues 1 to 33 (MPPTSVSPPRTAPGPANPSPAHPSRVRVIHPGG) form a disordered region. One can recognise a Photolyase/cryptochrome alpha/beta domain in the interval 38 to 171 (GPVVYWMLRD…AVHQVDAHNV (134 aa)). FAD is bound by residues Tyr268 and 282-285 (SGLS). Phosphoserine is present on Ser312. FAD contacts are provided by residues 319-327 (ELVVRRELA), Lys390, Asn421, Asp427, and 427-429 (DGR). The interval 487–506 (KKRNAEESPNPVVKLSKSQH) is disordered.

The protein belongs to the DNA photolyase class-2 family. Requires FAD as cofactor. Expressed in proliferating tissues. Highly expressed in roots and shoot apical meristem (SAM). Expressed in leaves, flag leaves, and panicle.

Its subcellular location is the nucleus. The enzyme catalyses cyclobutadipyrimidine (in DNA) = 2 pyrimidine residues (in DNA).. In terms of biological role, involved in repair of UV radiation-induced DNA damage. Catalyzes the light-dependent monomerization (300-600 nm) of cyclobutylpyrimidine dimers (CPDs), which are formed between adjacent bases on the same DNA strand upon exposure to ultraviolet radiation. Required for plant survival in the presence of UV-B light. Not involved in the repair of (6-4) photoproducts. The polypeptide is Deoxyribodipyrimidine photo-lyase (PHR) (Oryza sativa subsp. japonica (Rice)).